A 443-amino-acid chain; its full sequence is Methylenetetrahydrofolate--tRNA-(uracil-5-)-methyltransferase TrmFO (443 aa).

8 to 13 (GAGLAG) contacts FAD.

It belongs to the MnmG family. TrmFO subfamily. FAD serves as cofactor.

The protein resides in the cytoplasm. It carries out the reaction uridine(54) in tRNA + (6R)-5,10-methylene-5,6,7,8-tetrahydrofolate + NADH + H(+) = 5-methyluridine(54) in tRNA + (6S)-5,6,7,8-tetrahydrofolate + NAD(+). The enzyme catalyses uridine(54) in tRNA + (6R)-5,10-methylene-5,6,7,8-tetrahydrofolate + NADPH + H(+) = 5-methyluridine(54) in tRNA + (6S)-5,6,7,8-tetrahydrofolate + NADP(+). Catalyzes the folate-dependent formation of 5-methyl-uridine at position 54 (M-5-U54) in all tRNAs. The chain is Methylenetetrahydrofolate--tRNA-(uracil-5-)-methyltransferase TrmFO from Thermus thermophilus (strain ATCC 27634 / DSM 579 / HB8).